Here is a 290-residue protein sequence, read N- to C-terminus: Fructose-1,6-bisphosphatase class 1 (290 aa).

4 residues coordinate Mg(2+): Glu78, Asp96, Leu98, and Asp99. Substrate is bound by residues 99-102 (DGSS), Tyr201, and Lys226. Residue Glu232 coordinates Mg(2+).

Belongs to the FBPase class 1 family. Homotetramer. Requires Mg(2+) as cofactor.

The protein resides in the cytoplasm. It catalyses the reaction beta-D-fructose 1,6-bisphosphate + H2O = beta-D-fructose 6-phosphate + phosphate. The protein operates within carbohydrate biosynthesis; gluconeogenesis. The protein is Fructose-1,6-bisphosphatase class 1 of Helicobacter pylori (strain G27).